Here is a 353-residue protein sequence, read N- to C-terminus: MTAILERRESENLWGRFCNWITSTENRLYIGWFGVLMIPTLLTATSVFIIAFIAAPPVDIDGIREPVSGSLLYGNNIISGAIIPTSAAIGLHFYPIWEAASVDEWLYNGGPYELIVLHFLLGVACYMGREWELSFRLGMRPWIAVAYSAPVAAATAVFLIYPIGQGSFSDGMPLGISGTFNFMIVFQAEHNILMHPFHMLGVAGVFGGSLFSAMHGSLVTSSLIRETTENESANEGYRFGQEEETYNIVAAHGYFGRLIFQYASFNNSRSLHFFLAAWPVVGIWFTALGISTMAFNLNGFNFNQSVVDSQGRVINTWADIINRANLGMEVMHERNAHNFPLDLAAIEAPATNG.

The residue at position 2 (T2) is an N-acetylthreonine. At T2 the chain carries Phosphothreonine. 3 consecutive transmembrane segments (helical) span residues 29–46, 118–133, and 142–156; these read YIGW…TATS, HFLL…EWEL, and WIAV…AATA. H118 lines the chlorophyll a pocket. Pheophytin a is bound at residue Y126. Residues D170 and E189 each contribute to the [CaMn4O5] cluster site. A helical transmembrane segment spans residues 197-218; that stretch reads FHMLGVAGVFGGSLFSAMHGSL. H198 is a chlorophyll a binding site. A quinone-binding positions include H215 and 264–265; that span reads SF. H215 provides a ligand contact to Fe cation. H272 is a Fe cation binding site. The helical transmembrane segment at 274-288 threads the bilayer; the sequence is FLAAWPVVGIWFTAL. Residues H332, E333, D342, and A344 each coordinate [CaMn4O5] cluster. A propeptide spanning residues 345 to 353 is cleaved from the precursor; the sequence is AIEAPATNG.

This sequence belongs to the reaction center PufL/M/PsbA/D family. PSII is composed of 1 copy each of membrane proteins PsbA, PsbB, PsbC, PsbD, PsbE, PsbF, PsbH, PsbI, PsbJ, PsbK, PsbL, PsbM, PsbT, PsbX, PsbY, PsbZ, Psb30/Ycf12, at least 3 peripheral proteins of the oxygen-evolving complex and a large number of cofactors. It forms dimeric complexes. Requires The D1/D2 heterodimer binds P680, chlorophylls that are the primary electron donor of PSII, and subsequent electron acceptors. It shares a non-heme iron and each subunit binds pheophytin, quinone, additional chlorophylls, carotenoids and lipids. D1 provides most of the ligands for the Mn4-Ca-O5 cluster of the oxygen-evolving complex (OEC). There is also a Cl(-1) ion associated with D1 and D2, which is required for oxygen evolution. The PSII complex binds additional chlorophylls, carotenoids and specific lipids. as cofactor. Tyr-161 forms a radical intermediate that is referred to as redox-active TyrZ, YZ or Y-Z. In terms of processing, C-terminally processed by CTPA; processing is essential to allow assembly of the oxygen-evolving complex and thus photosynthetic growth.

It is found in the plastid membrane. It catalyses the reaction 2 a plastoquinone + 4 hnu + 2 H2O = 2 a plastoquinol + O2. Photosystem II (PSII) is a light-driven water:plastoquinone oxidoreductase that uses light energy to abstract electrons from H(2)O, generating O(2) and a proton gradient subsequently used for ATP formation. It consists of a core antenna complex that captures photons, and an electron transfer chain that converts photonic excitation into a charge separation. The D1/D2 (PsbA/PsbD) reaction center heterodimer binds P680, the primary electron donor of PSII as well as several subsequent electron acceptors. This chain is Photosystem II protein D1, found in Cuscuta exaltata (Tall dodder).